The chain runs to 633 residues: DNA mismatch repair protein MutL (633 aa).

A disordered region spans residues 338–407; that stretch reads AAPEPERTLP…VPPPTLRAIP (70 aa). Over residues 366-391 the composition is skewed to low complexity; it reads PGSAFPAAARPAPASSAAQPPLSSSA.

Belongs to the DNA mismatch repair MutL/HexB family.

In terms of biological role, this protein is involved in the repair of mismatches in DNA. It is required for dam-dependent methyl-directed DNA mismatch repair. May act as a 'molecular matchmaker', a protein that promotes the formation of a stable complex between two or more DNA-binding proteins in an ATP-dependent manner without itself being part of a final effector complex. In Akkermansia muciniphila (strain ATCC BAA-835 / DSM 22959 / JCM 33894 / BCRC 81048 / CCUG 64013 / CIP 107961 / Muc), this protein is DNA mismatch repair protein MutL.